A 289-amino-acid polypeptide reads, in one-letter code: BTB/POZ domain-containing protein KCTD7 (289 aa).

Over residues 1–10 (MVVVTGQSKG) the composition is skewed to polar residues. Residues 1–35 (MVVVTGQSKGSGDPDEAMSSSDAEDDFQEPATPTA) are disordered. One can recognise a BTB domain in the interval 51–149 (EVVPLNVGGM…HLEDVQPLKG (99 aa)).

The protein localises to the cell membrane. It is found in the cytoplasm. Its subcellular location is the cytosol. Its function is as follows. May be involved in the control of excitability of cortical neurons. This Gallus gallus (Chicken) protein is BTB/POZ domain-containing protein KCTD7 (KCTD7).